The sequence spans 474 residues: Zinc finger protein 230 (474 aa).

One can recognise a KRAB domain in the interval 8–76 (VTFKDVAVFF…ETATQREGNS (69 aa)). The tract at residues 80–167 (TIAEAGPHED…PQQFHSGEKS (88 aa)) is KRNB. 9 C2H2-type zinc fingers span residues 168–190 (HTCN…QRVH), 196–218 (SKCD…ERVH), 224–246 (FKCE…CKLH), 252–274 (YICE…QIIH), 280–302 (FKCE…CMVH), 308–330 (YKSE…QIIH), 336–358 (YNCK…QRIH), 364–386 (YRCE…QRVH), and 392–414 (YNCK…KKLH). The C2H2-type 10; atypical zinc-finger motif lies at 420 to 442 (FKCEDCGKRLVHRSFCKDQQGDH).

The protein belongs to the krueppel C2H2-type zinc-finger protein family.

The protein localises to the nucleus. Functionally, may be involved in transcriptional regulation. The polypeptide is Zinc finger protein 230 (ZNF230) (Homo sapiens (Human)).